Consider the following 206-residue polypeptide: Large ribosomal subunit protein uL4 (206 aa).

The segment at 51 to 76 (AKTRAEVSGGGIKPWRQKGTGRARQG) is disordered.

Belongs to the universal ribosomal protein uL4 family. In terms of assembly, part of the 50S ribosomal subunit.

Its function is as follows. One of the primary rRNA binding proteins, this protein initially binds near the 5'-end of the 23S rRNA. It is important during the early stages of 50S assembly. It makes multiple contacts with different domains of the 23S rRNA in the assembled 50S subunit and ribosome. In terms of biological role, forms part of the polypeptide exit tunnel. In Clostridium kluyveri (strain ATCC 8527 / DSM 555 / NBRC 12016 / NCIMB 10680 / K1), this protein is Large ribosomal subunit protein uL4.